Consider the following 133-residue polypeptide: ATP synthase epsilon chain, chloroplastic (133 aa).

It belongs to the ATPase epsilon chain family. In terms of assembly, F-type ATPases have 2 components, CF(1) - the catalytic core - and CF(0) - the membrane proton channel. CF(1) has five subunits: alpha(3), beta(3), gamma(1), delta(1), epsilon(1). CF(0) has three main subunits: a, b and c.

The protein localises to the plastid. The protein resides in the chloroplast thylakoid membrane. Produces ATP from ADP in the presence of a proton gradient across the membrane. This Zygnema circumcarinatum (Green alga) protein is ATP synthase epsilon chain, chloroplastic.